Reading from the N-terminus, the 379-residue chain is MADSCCIRLHLLASVFLLLFSSFNLQGIAAENLSKQKLTSLILQNEIVKEVNENPNAGWKAAFNDRFANATVAEFKRLLGVIQTPKTAYLGVPIVRHDLSLKLPKEFDARTAWSHCTSIRRILVGYILNNVLLWSTITLWFWFLLGHCGSCWAFGAVESLSDRFCIKYNLNVSLSANDVIACCGLLCGFGCNGGFPMGAWLYFKYHGVVTQECDPYFDNTGCSHPGCEPTYPTPKCERKCVSRNQLWGESKHYGVGAYRINPDPQDIMAEVYKNGPVEVAFTVYEDFAHYKSGVYKYITGTKIGGHAVKLIGWGTSDDGEDYWLLANQWNRSWGDDGYFKIRRGTNECGIEQSVVAGLPSEKNVFKGITTSDDLLVSSV.

The N-terminal stretch at 1–30 (MADSCCIRLHLLASVFLLLFSSFNLQGIAA) is a signal peptide. Positions 31–102 (ENLSKQKLTS…PIVRHDLSLK (72 aa)) are cleaved as a propeptide — activation peptide. N-linked (GlcNAc...) asparagine glycosylation is found at Asn32 and Asn69. 6 disulfide bridges follow: Cys116/Cys165, Cys148/Cys191, Cys182/Cys236, Cys183/Cys187, Cys213/Cys240, and Cys222/Cys227. Residue Cys151 is part of the active site. An N-linked (GlcNAc...) asparagine glycan is attached at Asn171. Active-site residues include His306 and Asn327. An N-linked (GlcNAc...) asparagine glycan is attached at Asn330. A propeptide spans 363-379 (NVFKGITTSDDLLVSSV) (removed in mature form).

The protein belongs to the peptidase C1 family.

In terms of biological role, thiol protease that plays a central role in plant programmed cell death (PCD). In addition to its role in protein degradation, may cleave and/or degrade a number of target proteins, activating signaling towards PCD. Contributes to the increase of caspase-3-like activity after UV-C-induced PCD and is required for abiotic stress-induced PCD. Functions redundantly with CATHB2 and CATHB3 in basal defense and distinct forms of plant programmed cell death (PCD). Participates in the establishment of basal resistance against the bacterial pathogen Pseudomonase syringae pv. tomato DC3000. Required for full levels of PCD during resistance (R) gene-mediated hypersensitive response (HR). Involved in the regulation of senescence, a developmental form of PCD in plants. This is Cathepsin B-like protease 1 from Arabidopsis thaliana (Mouse-ear cress).